The following is a 473-amino-acid chain: Lactate utilization protein B (473 aa).

4Fe-4S ferredoxin-type domains are found at residues 303–333 and 352–381; these read GTAFQPVLQCIRCAACINVCPVYRHVGGHSY and YDDYQELPFASSLCAACTDACPVKIPLHEL. Positions 312, 315, 318, 322, 365, 368, and 372 each coordinate [4Fe-4S] cluster.

This sequence belongs to the LutB/YkgF family.

In terms of biological role, is involved in L-lactate degradation and allows cells to grow with lactate as the sole carbon source. Has probably a role as an electron transporter during oxidation of L-lactate. The polypeptide is Lactate utilization protein B (Bacillus pumilus (strain SAFR-032)).